Consider the following 147-residue polypeptide: Microsomal glutathione S-transferase 2 (147 aa).

A run of 3 helical transmembrane segments spans residues 6-26 (ILLA…ALQV), 59-79 (FYPI…QVFA), and 111-131 (SLGI…NSFL).

It belongs to the MAPEG family. In terms of assembly, homotrimer. As to expression, liver, spleen, skeletal muscle, heart, adrenals, pancreas, prostate, testis, fetal liver, and fetal spleen. Very low expression in lung, brain, placenta and bone marrow. Abundantly expressed in human umbilical vein endothelial cells (at protein level).

Its subcellular location is the endoplasmic reticulum membrane. It localises to the microsome membrane. The enzyme catalyses RX + glutathione = an S-substituted glutathione + a halide anion + H(+). The catalysed reaction is 1-chloro-2,4-dinitrobenzene + glutathione = 2,4-dinitrophenyl-S-glutathione + chloride + H(+). It carries out the reaction leukotriene C4 = leukotriene A4 + glutathione. It catalyses the reaction (5S)-hydroperoxy-(6E,8Z,11Z,14Z)-eicosatetraenoate + 2 glutathione = (5S)-hydroxy-(6E,8Z,11Z,14Z)-eicosatetraenoate + glutathione disulfide + H2O. Each monomer can bind on GSH molecule but only one subunit is catalytically active. Its function is as follows. Catalyzes several different glutathione-dependent reactions. Catalyzes the glutathione-dependent reduction of lipid hydroperoxides, such as 5-HPETE. Has glutathione transferase activity, toward xenobiotic electrophiles, such as 1-chloro-2, 4-dinitrobenzene (CDNB). Also catalyzes the conjugation of leukotriene A4 with reduced glutathione to form leukotriene C4 (LTC4). Involved in oxidative DNA damage induced by ER stress and anticancer agents by activating LTC4 biosynthetic machinery in nonimmune cells. The sequence is that of Microsomal glutathione S-transferase 2 (MGST2) from Homo sapiens (Human).